Here is a 35-residue protein sequence, read N- to C-terminus: Kappa-stichotoxin-She3a (35 aa).

One can recognise a ShKT domain in the interval 3–35 (CIDTIPKSRCTAFQCKHSMKYRLSFCRKTCGTC). Intrachain disulfides connect C3–C35, C12–C28, and C17–C32.

Belongs to the sea anemone type 1 potassium channel toxin family. Type 1a subfamily.

Its subcellular location is the secreted. The protein resides in the nematocyst. In terms of biological role, peptide with both antimicrobial and neurotoxin activities. Inhibits voltage-dependent potassium channels. Potently blocks Kv1.1/KCNA1 (IC(50)=6.7-87 pM) and Kv1.3/KCNA3 (IC(50)=10-250 pM). Less potently blocks Kv1.4/KCNA4 (IC(50)=0.31 nM), and Kv1.6/KCNA6 (IC(50)=0.16 nM). Shows moderate activity on Kv1.2/KCNA2 (IC(50)=9 nM), Kv1.7/KCNA7 (IC(50)=11.5 nM), and KCa3.1/KCNN4 (Kd=0.03-30 nM). Blocks Kv channels by binding to a shallow vestibule at the outer entrance to the ion conduction pathway and occluding the entrance to the pore. Shows antibacterial activity against all tested bacteria (the Gram-positive bacteria B.subtilis and S.aureus, and the Gram-negative bacteria S.typhimurium and P.aeruginosa). The sequence is that of Kappa-stichotoxin-She3a from Stichodactyla helianthus (Sun anemone).